Here is a 357-residue protein sequence, read N- to C-terminus: Low-salt glycan biosynthesis nucleotidyltransferase Agl11 (357 aa).

Mg(2+)-binding residues include aspartate 108 and aspartate 221.

The protein belongs to the glucose-1-phosphate thymidylyltransferase family. Mg(2+) is required as a cofactor.

It participates in protein modification; protein glycosylation. The protein operates within cell surface structure biogenesis; S-layer biogenesis. Nucleotidyltransferase involved in N-glycan biosynthetic pathway that takes place under low-salt conditions (1.75 M instead of 3.4 M). Participates in the formation of the tetrasaccharide present at 'Asn-532' of S-layer glycoprotein Csg, consisting of a sulfated hexose, 2 hexoses and rhamnose. Involved in the addition of final rhamnose (sugar 4) of the tetrasaccharide on the dolichol phosphate carrier. This chain is Low-salt glycan biosynthesis nucleotidyltransferase Agl11 (agl11), found in Haloferax volcanii (strain ATCC 29605 / DSM 3757 / JCM 8879 / NBRC 14742 / NCIMB 2012 / VKM B-1768 / DS2) (Halobacterium volcanii).